Consider the following 434-residue polypeptide: MESILSLLRGMGIMHLELGQALMMLISLVLLWLAIARKFEPLLLLPIGFGGLLSNIPEAGLAMSALESLLHQGSAEQIAIIAAKLNTVADPVAIKEALANAVPSVQNQLEVMAGDMGYNAGVLALFYKVAIGYGVAPLIIFMGVGAMTDFGPLLANPRTLLLGAAAQFGIFATIIGALLLNWTGIISFTLPQAAAIGIIGGADGPTAIYLSSKLAPELLGAIAVAAYSYMALVPLIQPPIMRALTTQAERKIKMVQLRNVSNREKILFPIVLVTLVALLLPDAAPLLGMFCFGNLLRTSGVVERLNDTAQNALINIVTIFLGLAVGSKLVADKFLQPQTLGILLLGVVAFCIGTASGVIMAKFMNKICKHPINPLIGAAGVSAVPMAARVANKVGLEEDHQNFLLMHAMGPNVAGVIGSAIAAGVMLKYVSALM.

A run of 9 helical transmembrane segments spans residues 13-35 (IMHL…WLAI), 122-144 (VLAL…FMGV), 159-181 (TLLL…LLLN), 186-208 (ISFT…PTAI), 223-245 (AVAA…RALT), 266-288 (ILFP…PLLG), 308-327 (TAQN…AVGS), 339-361 (TLGI…VIMA), and 403-425 (FLLM…AAGV).

It belongs to the GcdB/MmdB/OadB family. Heterotrimer of an alpha, a beta and a gamma subunit. Na(+) serves as cofactor.

Its subcellular location is the cell membrane. It catalyses the reaction oxaloacetate + 2 Na(+)(in) + H(+) = pyruvate + 2 Na(+)(out) + CO2. Catalyzes the decarboxylation of oxaloacetate coupled to Na(+) translocation. The polypeptide is Probable oxaloacetate decarboxylase beta chain (oadB) (Pasteurella multocida (strain Pm70)).